The sequence spans 697 residues: Potassium channel KAT2 (697 aa).

Residues 1–63 (MSISCTRNFF…PFDPRFRGWE (63 aa)) lie on the Cytoplasmic side of the membrane. The chain crosses the membrane as a helical span at residues 64 to 84 (MWLVILVIYSAWICPFEFAFI). The Extracellular portion of the chain corresponds to 85-91 (TYKKDAL). The helical transmembrane segment at 92–112 (FIIDNIVNGFFAIDIILTFFV) threads the bilayer. Over 113–134 (AYLDSHSYLLVDKPKKIAIRYL) the chain is Cytoplasmic. The chain crosses the membrane as a helical span at residues 135 to 155 (STWFAFDVCSTAPFQSLSLLF). Residues 156-165 (KYNGSEIGFR) lie on the Extracellular side of the membrane. Residue N158 is glycosylated (N-linked (GlcNAc...) asparagine). The helical; Voltage-sensor transmembrane segment at 166-186 (VLSMLRLWRLRRVSSLFARLE) threads the bilayer. The Cytoplasmic segment spans residues 187–200 (KDIRFNYFWTRCTK). The chain crosses the membrane as a helical span at residues 201–221 (LISVTLFAVHCAGCFAYLIAD). Over 222–248 (QYHDPTKTWIGAVYPNFKETSVWSRYV) the chain is Extracellular. The segment at residues 249 to 268 (TALYWSITTLTTTGYGDLHA) is an intramembrane region (pore-forming). At 269-272 (ENPR) the chain is on the extracellular side. The chain crosses the membrane as a helical span at residues 273–293 (EMLFFVFFMLFNLGFTSYLIG). Over 294-697 (NMTNLVVHWT…HLYILINENS (404 aa)) the chain is Cytoplasmic. Residue 377-496 (LFHGVSRNFL…RVIMNNLFMK (120 aa)) participates in a nucleoside 3',5'-cyclic phosphate binding. One can recognise a KHA domain in the interval 629 to 697 (RVTIHLKSRD…HLYILINENS (69 aa)).

Belongs to the potassium channel family. Plant (TC 1.A.1.4) subfamily. In terms of assembly, the potassium channel is probably composed of a homo- or heterotetrameric complex of pore-forming subunits. May interact with KAT1. Interacts with SLAC1. In terms of tissue distribution, expressed in guard cells of hypocotyls, stems leaves and petioles. Detected also in the phloem of minor veins and in flower at a lower level.

The protein resides in the membrane. Its function is as follows. Highly selective inward-rectifying potassium channel. This voltage-dependent channel could mediate long-term potassium influx into guard cells leading to stomatal opening. Assuming opened or closed conformations in response to the voltage difference across the membrane, the channel is activated by hyperpolarization. The channel activity is enhanced upon external acidification. In Arabidopsis thaliana (Mouse-ear cress), this protein is Potassium channel KAT2 (KAT2).